The chain runs to 498 residues: Protein flp (498 aa).

The next 4 membrane-spanning stretches (helical) occupy residues 6–26 (LYFL…IYIT), 389–409 (FNIV…FSAY), 433–453 (LTLC…YLIL), and 471–491 (LALI…LLFL).

It localises to the cell membrane. Its precise function is unknown. Has no penicillin-binding activity and is not involved in methicillin resistance. This is Protein flp (flp) from Staphylococcus aureus (strain Mu50 / ATCC 700699).